A 179-amino-acid polypeptide reads, in one-letter code: Large ribosomal subunit protein uL5 (179 aa).

The protein belongs to the universal ribosomal protein uL5 family. Part of the 50S ribosomal subunit; part of the 5S rRNA/L5/L18/L25 subcomplex. Contacts the 5S rRNA and the P site tRNA. Forms a bridge to the 30S subunit in the 70S ribosome.

In terms of biological role, this is one of the proteins that bind and probably mediate the attachment of the 5S RNA into the large ribosomal subunit, where it forms part of the central protuberance. In the 70S ribosome it contacts protein S13 of the 30S subunit (bridge B1b), connecting the 2 subunits; this bridge is implicated in subunit movement. Contacts the P site tRNA; the 5S rRNA and some of its associated proteins might help stabilize positioning of ribosome-bound tRNAs. This Prochlorococcus marinus (strain MIT 9301) protein is Large ribosomal subunit protein uL5.